Here is an 85-residue protein sequence, read N- to C-terminus: Large ribosomal subunit protein bL27 (85 aa).

Residues 1–21 (MAHKKAGGSTRNGRDSESKRL) are disordered.

Belongs to the bacterial ribosomal protein bL27 family.

This Ectopseudomonas mendocina (strain ymp) (Pseudomonas mendocina) protein is Large ribosomal subunit protein bL27.